A 320-amino-acid chain; its full sequence is Mycothiol acetyltransferase (320 aa).

2 consecutive N-acetyltransferase domains span residues 16-141 and 152-320; these read RQVR…RSLR and LQIR…AALA. Glu-36 contributes to the 1D-myo-inositol 2-(L-cysteinylamino)-2-deoxy-alpha-D-glucopyranoside binding site. Acetyl-CoA is bound by residues 80–82 and 88–93; these read LVV and RRGIAT. Positions 179, 229, and 239 each coordinate 1D-myo-inositol 2-(L-cysteinylamino)-2-deoxy-alpha-D-glucopyranoside. Residues 243–245 and 250–256 contribute to the acetyl-CoA site; these read LGV and QGRGLGR. Tyr-284 lines the 1D-myo-inositol 2-(L-cysteinylamino)-2-deoxy-alpha-D-glucopyranoside pocket. 289 to 294 contacts acetyl-CoA; it reads NIAAVR.

The protein belongs to the acetyltransferase family. MshD subfamily. In terms of assembly, monomer.

The enzyme catalyses 1D-myo-inositol 2-(L-cysteinylamino)-2-deoxy-alpha-D-glucopyranoside + acetyl-CoA = mycothiol + CoA + H(+). Catalyzes the transfer of acetyl from acetyl-CoA to desacetylmycothiol (Cys-GlcN-Ins) to form mycothiol. The sequence is that of Mycothiol acetyltransferase from Mycobacterium marinum (strain ATCC BAA-535 / M).